Reading from the N-terminus, the 210-residue chain is dTTP/UTP pyrophosphatase (210 aa).

The Proton acceptor role is filled by Asp89.

Belongs to the Maf family. YhdE subfamily. A divalent metal cation is required as a cofactor.

It localises to the cytoplasm. It catalyses the reaction dTTP + H2O = dTMP + diphosphate + H(+). The enzyme catalyses UTP + H2O = UMP + diphosphate + H(+). Nucleoside triphosphate pyrophosphatase that hydrolyzes dTTP and UTP. May have a dual role in cell division arrest and in preventing the incorporation of modified nucleotides into cellular nucleic acids. This chain is dTTP/UTP pyrophosphatase, found in Burkholderia thailandensis (strain ATCC 700388 / DSM 13276 / CCUG 48851 / CIP 106301 / E264).